Consider the following 185-residue polypeptide: Peptidyl-tRNA hydrolase (185 aa).

Tyrosine 14 provides a ligand contact to tRNA. Catalysis depends on histidine 19, which acts as the Proton acceptor. TRNA contacts are provided by tyrosine 65, asparagine 67, and asparagine 113.

This sequence belongs to the PTH family. Monomer.

It localises to the cytoplasm. The catalysed reaction is an N-acyl-L-alpha-aminoacyl-tRNA + H2O = an N-acyl-L-amino acid + a tRNA + H(+). In terms of biological role, hydrolyzes ribosome-free peptidyl-tRNAs (with 1 or more amino acids incorporated), which drop off the ribosome during protein synthesis, or as a result of ribosome stalling. Its function is as follows. Catalyzes the release of premature peptidyl moieties from peptidyl-tRNA molecules trapped in stalled 50S ribosomal subunits, and thus maintains levels of free tRNAs and 50S ribosomes. The chain is Peptidyl-tRNA hydrolase from Rickettsia canadensis (strain McKiel).